Consider the following 138-residue polypeptide: Ribosome-binding factor A (138 aa).

The protein belongs to the RbfA family. Monomer. Binds 30S ribosomal subunits, but not 50S ribosomal subunits or 70S ribosomes.

It localises to the cytoplasm. Functionally, one of several proteins that assist in the late maturation steps of the functional core of the 30S ribosomal subunit. Associates with free 30S ribosomal subunits (but not with 30S subunits that are part of 70S ribosomes or polysomes). Required for efficient processing of 16S rRNA. May interact with the 5'-terminal helix region of 16S rRNA. The chain is Ribosome-binding factor A from Sodalis glossinidius (strain morsitans).